The primary structure comprises 316 residues: ATP synthase gamma chain (316 aa).

The protein belongs to the ATPase gamma chain family. In terms of assembly, F-type ATPases have 2 components, CF(1) - the catalytic core - and CF(0) - the membrane proton channel. CF(1) has five subunits: alpha(3), beta(3), gamma(1), delta(1), epsilon(1). CF(0) has three main subunits: a, b and c.

The protein resides in the cellular thylakoid membrane. Functionally, produces ATP from ADP in the presence of a proton gradient across the membrane. The gamma chain is believed to be important in regulating ATPase activity and the flow of protons through the CF(0) complex. The chain is ATP synthase gamma chain from Prochlorococcus marinus (strain MIT 9313).